We begin with the raw amino-acid sequence, 441 residues long: Enolase (441 aa).

Residue Gln-164 participates in (2R)-2-phosphoglycerate binding. Glu-206 acts as the Proton donor in catalysis. The Mg(2+) site is built by Asp-243, Glu-289, and Asp-316. (2R)-2-phosphoglycerate is bound by residues Lys-341, Arg-370, Ser-371, and Lys-392. Lys-341 functions as the Proton acceptor in the catalytic mechanism.

The protein belongs to the enolase family. It depends on Mg(2+) as a cofactor.

It is found in the cytoplasm. The protein localises to the secreted. The protein resides in the cell surface. The catalysed reaction is (2R)-2-phosphoglycerate = phosphoenolpyruvate + H2O. Its pathway is carbohydrate degradation; glycolysis; pyruvate from D-glyceraldehyde 3-phosphate: step 4/5. Catalyzes the reversible conversion of 2-phosphoglycerate (2-PG) into phosphoenolpyruvate (PEP). It is essential for the degradation of carbohydrates via glycolysis. This chain is Enolase, found in Leuconostoc mesenteroides subsp. mesenteroides (strain ATCC 8293 / DSM 20343 / BCRC 11652 / CCM 1803 / JCM 6124 / NCDO 523 / NBRC 100496 / NCIMB 8023 / NCTC 12954 / NRRL B-1118 / 37Y).